A 396-amino-acid polypeptide reads, in one-letter code: Adenylyltransferase and sulfurtransferase UBA4 (396 aa).

ATP-binding positions include Gly51, Asp72, 79–83 (SNLHR), Lys95, and 139–140 (DG). 2 residues coordinate Zn(2+): Cys180 and Cys183. Catalysis depends on Cys197, which acts as the Glycyl thioester intermediate; for adenylyltransferase activity. Residues Cys257 and Cys260 each coordinate Zn(2+). Positions 305–394 (VSTKHILLDV…WAKNVDEKFP (90 aa)) constitute a Rhodanese domain. Cys355 acts as the Cysteine persulfide intermediate; for sulfurtransferase activity in catalysis.

This sequence in the N-terminal section; belongs to the HesA/MoeB/ThiF family. UBA4 subfamily. It depends on Zn(2+) as a cofactor.

The protein resides in the cytoplasm. It is found in the cytosol. The protein operates within tRNA modification; 5-methoxycarbonylmethyl-2-thiouridine-tRNA biosynthesis. Its function is as follows. Plays a central role in 2-thiolation of mcm(5)S(2)U at tRNA wobble positions of cytosolic tRNA(Lys), tRNA(Glu) and tRNA(Gln). Acts by mediating the C-terminal thiocarboxylation of sulfur carrier URM1. Its N-terminus first activates URM1 as acyl-adenylate (-COAMP), then the persulfide sulfur on the catalytic cysteine is transferred to URM1 to form thiocarboxylation (-COSH) of its C-terminus. The reaction probably involves hydrogen sulfide that is generated from the persulfide intermediate and that acts as a nucleophile towards URM1. Subsequently, a transient disulfide bond is formed. Does not use thiosulfate as sulfur donor; NFS1 probably acting as a sulfur donor for thiocarboxylation reactions. Prior mcm(5) tRNA modification by the elongator complex is required for 2-thiolation. May also be involved in protein urmylation. This is Adenylyltransferase and sulfurtransferase UBA4 from Yarrowia lipolytica (strain CLIB 122 / E 150) (Yeast).